The chain runs to 401 residues: Argininosuccinate synthase (401 aa).

8–16 provides a ligand contact to ATP; the sequence is AYSGGLDTS. Y87 is a binding site for L-citrulline. G117 contacts ATP. L-aspartate is bound by residues T119, N123, and D124. N123 is an L-citrulline binding site. L-citrulline is bound by residues R127, S175, E259, and Y271.

Belongs to the argininosuccinate synthase family. Type 1 subfamily. In terms of assembly, homotetramer.

It localises to the cytoplasm. It catalyses the reaction L-citrulline + L-aspartate + ATP = 2-(N(omega)-L-arginino)succinate + AMP + diphosphate + H(+). The protein operates within amino-acid biosynthesis; L-arginine biosynthesis; L-arginine from L-ornithine and carbamoyl phosphate: step 2/3. The protein is Argininosuccinate synthase of Corynebacterium efficiens (strain DSM 44549 / YS-314 / AJ 12310 / JCM 11189 / NBRC 100395).